Consider the following 390-residue polypeptide: Nucleotide-sugar uncharacterized transporter 1 (390 aa).

Transmembrane regions (helical) follow at residues 61-81 (ICGP…IIFM), 89-109 (IGFE…YLLM), 128-148 (SLLP…LANV), 155-175 (VGFY…AEFL), 182-201 (SFMK…VATV), 206-228 (FSLF…KILW), 249-269 (ITLL…ALSF), 278-298 (AILV…LALG), 306-326 (VVLG…IFGS), and 329-349 (GFIS…YTYL). A compositionally biased stretch (low complexity) spans 356 to 365 (LKTSSSSSAL). Residues 356–390 (LKTSSSSSALSEKKSRFSDLKDDDKNLEPYGSEAV) form a disordered region. Basic and acidic residues predominate over residues 366 to 382 (SEKKSRFSDLKDDDKNL).

Belongs to the TPT transporter family. TPT (TC 2.A.7.9) subfamily.

The protein resides in the membrane. The protein is Nucleotide-sugar uncharacterized transporter 1 of Arabidopsis thaliana (Mouse-ear cress).